Consider the following 158-residue polypeptide: Chromobox protein homolog 7 (158 aa).

The 59-residue stretch at 11–69 (FAVESIRKKRVRKGKVEYLVKWKGWPPKYSTWEPEEHILDPRLVMAYEEKEEKDRASGY) folds into the Chromo domain. A disordered region spans residues 60-124 (KEEKDRASGY…PPPWTPMLPS (65 aa)). Positions 68 to 78 (GYRKRGPKPKR) are enriched in basic residues.

In terms of assembly, component of a PRC1-like complex. Distinct PRC1-like core complexes are composed of a RING1 subunit (RING1B or RING1A), one of the six PCGF proteins (PCGF1-6), one PHC protein (PHC1-3) and one of the CBX proteins (CBX2, CBX4, CBX6, CBX7 or CBX8). The composition of the PRC1 complex may differ between the PRC1 complex in pluripotent embryonic stem cells containing RNF2, CBX7 and PCGF2, and the PRC1 complex in differentiating cells containing RNF2, CBX2, CBX4 and BMI1. Interacts with RING1. Interacts with RNF2/RING1B. Interacts with PCGF1, PCGF2, PCGF3, PCGF5 and PCGF6. Interacts (via chromodomain) with histone H3K9Me3 and H3K27me3. Interacts with H3K9Me2 and H4K20Me1. Interacts (via chromodomain) with single-stranded and double-stranded RNA; RNA binding seems to be required for the localization to chromatin.

Its subcellular location is the nucleus. It is found in the chromosome. Component of a Polycomb group (PcG) multiprotein PRC1-like complex, a complex class required to maintain the transcriptionally repressive state of many genes, including Hox genes, throughout development. PcG PRC1 complex acts via chromatin remodeling and modification of histones; it mediates monoubiquitination of histone H2A 'Lys-119', rendering chromatin heritably changed in its expressibility. Promotes histone H3 trimethylation at 'Lys-9' (H3K9me3). Binds to histone H3 trimethylated 'Lys-9' (H3K9me3) or at 'Lys-27' (H3K27me3). May possibly also bind trimethylated lysine residues in other proteins (in vitro). Binds non-coding, single-stranded and double-stranded RNA. Plays a role in the timely repression of differentiation-specific genes in pluripotent embryonic stem cells to maintain the undifferentiated state. Regulator of cellular lifespan by maintaining the repression of CDKN2A, but not by inducing telomerase activity. The polypeptide is Chromobox protein homolog 7 (Cbx7) (Rattus norvegicus (Rat)).